A 591-amino-acid polypeptide reads, in one-letter code: Metalloendopeptidase OPG085 (591 aa).

Position 41 (histidine 41) interacts with Zn(2+). Glutamate 44 is a catalytic residue. The Zn(2+) site is built by histidine 45 and glutamate 112.

This sequence belongs to the peptidase M44 family. It depends on Zn(2+) as a cofactor. Post-translationally, undergoes proteolytic processing during the course of infection. May be cleaved into 46 kDa and 22 kDa products (Potential).

The protein localises to the virion. Its function is as follows. Probably involved in maturation of some viral proteins by processing them preferentially at Ala-Gly-|-Ser/Thr/Lys motifs. Does not seem to be responsible for the cleavage of major core proteins. The chain is Metalloendopeptidase OPG085 (OPG085) from Homo sapiens (Human).